A 179-amino-acid chain; its full sequence is PP2C-like domain-containing protein R307 (179 aa).

The PPM-type phosphatase domain occupies 1-176 (MNESKRENIQ…DNVSVIIIFF (176 aa)).

Its subcellular location is the virion. This Acanthamoeba polyphaga mimivirus (APMV) protein is PP2C-like domain-containing protein R307.